The sequence spans 457 residues: Argininosuccinate lyase (457 aa).

This sequence belongs to the lyase 1 family. Argininosuccinate lyase subfamily.

The protein resides in the cytoplasm. It catalyses the reaction 2-(N(omega)-L-arginino)succinate = fumarate + L-arginine. It participates in amino-acid biosynthesis; L-arginine biosynthesis; L-arginine from L-ornithine and carbamoyl phosphate: step 3/3. This chain is Argininosuccinate lyase, found in Serratia proteamaculans (strain 568).